Here is a 345-residue protein sequence, read N- to C-terminus: S-adenosylmethionine:tRNA ribosyltransferase-isomerase (345 aa).

The protein belongs to the QueA family. In terms of assembly, monomer.

The protein resides in the cytoplasm. The enzyme catalyses 7-aminomethyl-7-carbaguanosine(34) in tRNA + S-adenosyl-L-methionine = epoxyqueuosine(34) in tRNA + adenine + L-methionine + 2 H(+). The protein operates within tRNA modification; tRNA-queuosine biosynthesis. Its function is as follows. Transfers and isomerizes the ribose moiety from AdoMet to the 7-aminomethyl group of 7-deazaguanine (preQ1-tRNA) to give epoxyqueuosine (oQ-tRNA). The polypeptide is S-adenosylmethionine:tRNA ribosyltransferase-isomerase (Acinetobacter baumannii (strain ATCC 17978 / DSM 105126 / CIP 53.77 / LMG 1025 / NCDC KC755 / 5377)).